The primary structure comprises 58 residues: MSEVRVKENESLDSALKRFKRSCAKSGVLAEVRKREHYEKPSVKRKKKSEAARKRKFK.

Residues 35–58 form a disordered region; it reads REHYEKPSVKRKKKSEAARKRKFK. Basic residues predominate over residues 43–58; sequence VKRKKKSEAARKRKFK.

This sequence belongs to the bacterial ribosomal protein bS21 family.

This is Small ribosomal subunit protein bS21 from Ruminiclostridium cellulolyticum (strain ATCC 35319 / DSM 5812 / JCM 6584 / H10) (Clostridium cellulolyticum).